Consider the following 208-residue polypeptide: Thioredoxin domain-containing protein 9 (208 aa).

The Thioredoxin domain maps to 68 to 179 (YEEVADEKEF…MENRLARSEV (112 aa)).

In terms of tissue distribution, expressed throughout the body with high expression in the nervous system, including the ventral nerve cord and tail neurons, and vulva.

It localises to the nucleus. It is found in the cytoplasm. In terms of biological role, required for normal microtubule organization and function. Regulates tubulin acetylation in ALM and PLM neurons. This Caenorhabditis elegans protein is Thioredoxin domain-containing protein 9.